An 83-amino-acid chain; its full sequence is MKFLFLFLAILLAMEPVVSGRRHMLRCMGDLGICRPACRQSEEPYLYCRNYQPCCLPFYVRIDISGKEGKNDWSRENRWPKVS.

Positions 1–20 are cleaved as a signal peptide; it reads MKFLFLFLAILLAMEPVVSG. Intrachain disulfides connect Cys-27/Cys-54, Cys-34/Cys-48, and Cys-38/Cys-55.

Belongs to the beta-defensin family.

It localises to the secreted. Functionally, has antibacterial activity. This is Beta-defensin 119 (DEFB119) from Bos taurus (Bovine).